Here is a 338-residue protein sequence, read N- to C-terminus: Ribosomal RNA small subunit methyltransferase C (338 aa).

It belongs to the methyltransferase superfamily. RsmC family. Monomer.

It is found in the cytoplasm. The enzyme catalyses guanosine(1207) in 16S rRNA + S-adenosyl-L-methionine = N(2)-methylguanosine(1207) in 16S rRNA + S-adenosyl-L-homocysteine + H(+). Specifically methylates the guanine in position 1207 of 16S rRNA in the 30S particle. In Acinetobacter baylyi (strain ATCC 33305 / BD413 / ADP1), this protein is Ribosomal RNA small subunit methyltransferase C.